A 573-amino-acid polypeptide reads, in one-letter code: Kinesin light chain 1 (573 aa).

Residues 27 to 156 (KTKQVIQGLE…HLEFMNQLKK (130 aa)) are a coiled coil. A compositionally biased stretch (basic and acidic residues) spans 155–176 (KKYDDDISPSEDKDTDSTKEPL). Residues 155-203 (KKYDDDISPSEDKDTDSTKEPLDDLFPNDEDDPGQGIQQQHSSAAAAAQ) form a disordered region. A Phosphoserine modification is found at serine 162. Residues 188-203 (GQGIQQQHSSAAAAAQ) are compositionally biased toward low complexity. TPR repeat units lie at residues 213-246 (LRTL…LEKT), 255-288 (ATML…REKT), 297-330 (AATL…REKV), 339-372 (AKQL…YQTK), and 381-414 (AKTK…AHER). Position 449 is a phosphotyrosine (tyrosine 449). Serine 460 carries the post-translational modification Phosphoserine. One copy of the TPR 6 repeat lies at 464–497 (TTTLKNLGALYRRQGKFEAAETLEEAAMRSRKQG). A phosphoserine; by AMPK mark is found at serine 521 and serine 524. Glutamate 547 carries the phosphoserine modification. Residues 553 to 573 (SGRASFCGKRQQQQWPGRRHR) are disordered.

Belongs to the kinesin light chain family. Oligomeric complex composed of two heavy chains and two light chains. Interacts with SPAG9. Interacts with ATCAY; may link mitochondria to KLC1 and regulate mitochondria localization into neuron projections. Interacts (via TPR repeats) with TOR1A; the interaction associates TOR1A with the kinesin oligomeric complex. Interacts with BORCS5. Interacts with MAPK8IP3/JIP3 and NTRK2/TRKB; interaction with NTRK2/TRKB is mediated by MAPK8IP3/JIP3. Interacts with CLSTN1; phosphorylation at Ser-460 inhibits interaction with CLSTN1. In terms of assembly, (Microbial infection) Interacts with adenovirus hexon-interlacing protein; this interaction leads to capsid disruption at the nuclear pore complex during virus entry into host cell. In terms of processing, phosphorylation at Ser-460 by ERK inhibits interaction with CLSTN1 and localization to cytoplasmic vesicles. As to expression, found in a variety of tissues. Mostly abundant in brain and spine.

Its subcellular location is the cell projection. The protein resides in the growth cone. The protein localises to the cytoplasmic vesicle. It is found in the cytoplasm. It localises to the cytoskeleton. Kinesin is a microtubule-associated force-producing protein that may play a role in organelle transport. The light chain may function in coupling of cargo to the heavy chain or in the modulation of its ATPase activity. The chain is Kinesin light chain 1 (KLC1) from Homo sapiens (Human).